The sequence spans 440 residues: Metacaspase-1 (440 aa).

The interval 1–134 is disordered; the sequence is MFPGSGRKTY…NPQGFGQNSG (134 aa). The segment covering 14 to 51 has biased composition (pro residues); that stretch reads APPPGPPNGYQYGPPPGAQGQYPPPQGYPPQGYPPQGY. Over residues 52-81 the composition is skewed to low complexity; that stretch reads PPQGYAPQGYPPQGYAPQGYAPQGYQQQGG. Positions 82 to 94 are enriched in gly residues; sequence QQQGGQQQGGQQQ. Over residues 98 to 110 the composition is skewed to polar residues; sequence RQTYATQEAQNFG. Residues H230 and C286 contribute to the active site.

The protein belongs to the peptidase C14B family.

Involved in cell death (apoptosis). In Debaryomyces hansenii (strain ATCC 36239 / CBS 767 / BCRC 21394 / JCM 1990 / NBRC 0083 / IGC 2968) (Yeast), this protein is Metacaspase-1 (MCA1).